The primary structure comprises 312 residues: 3-methyl-2-oxobutanoate hydroxymethyltransferase (312 aa).

Belongs to the PanB family.

The catalysed reaction is 3-methyl-2-oxobutanoate + (6R)-5,10-methylene-5,6,7,8-tetrahydrofolate + H2O = 2-dehydropantoate + (6S)-5,6,7,8-tetrahydrofolate. The protein operates within cofactor biosynthesis; (R)-pantothenate biosynthesis; (R)-pantoate from 3-methyl-2-oxobutanoate: step 1/2. Its function is as follows. Probable 3-methyl-2-oxobutanoate hydroxymethyltransferase required for pantothenic acid biosynthesis. Acts downstream in the pantothenic acid pathway. This Saccharomyces cerevisiae (strain ATCC 204508 / S288c) (Baker's yeast) protein is 3-methyl-2-oxobutanoate hydroxymethyltransferase.